Here is a 1326-residue protein sequence, read N- to C-terminus: Probable serine/threonine-protein kinase gdt8 (1326 aa).

The first 22 residues, 1-22 (MINKILIKLITIIIFCFSFLFA), serve as a signal peptide directing secretion. Residues 23-782 (EEDLIRTPPG…VDRNENLELK (760 aa)) are Extracellular-facing. 2 disordered regions span residues 419–467 (VDQN…GNQG) and 731–762 (EPPT…QTPI). Low complexity-rich tracts occupy residues 422–460 (NNNN…NNNN) and 731–761 (EPPT…TQTP). A helical membrane pass occupies residues 783–803 (IALPICLSLALLIGIIIMICI). Residues 804–1326 (FKKVQSNSKL…TKEDKDLDEN (523 aa)) are Cytoplasmic-facing. Residues 833–858 (IVSQPPTVIEEKPQDNSKPDDQKLIE) are disordered. The span at 841-858 (IEEKPQDNSKPDDQKLIE) shows a compositional bias: basic and acidic residues. The Protein kinase domain maps to 1036–1292 (IKTEQLIASY…FSEISLHLEI (257 aa)). Residues 1042 to 1050 (IASYLPSKV) and lysine 1065 contribute to the ATP site. Aspartate 1158 (proton acceptor) is an active-site residue. Residues 1301 to 1326 (MNESEESTSNHNTNSKTKEDKDLDEN) are disordered. Basic and acidic residues predominate over residues 1316–1326 (KTKEDKDLDEN).

It in the N-terminal section; belongs to the GDT family. In the C-terminal section; belongs to the protein kinase superfamily. TKL Ser/Thr protein kinase family.

It localises to the membrane. The catalysed reaction is L-seryl-[protein] + ATP = O-phospho-L-seryl-[protein] + ADP + H(+). It carries out the reaction L-threonyl-[protein] + ATP = O-phospho-L-threonyl-[protein] + ADP + H(+). This Dictyostelium discoideum (Social amoeba) protein is Probable serine/threonine-protein kinase gdt8 (gdt8).